The primary structure comprises 434 residues: MRRATYAFALLAILVLGVVASGCIGGGTTTPTQTSPATQPTTTQTPTQTETQAVECGSGKVVIWHAMQPNELEVFQSLAEEYMALCPEVEIVFEQKPNLEDALKAAIPTGQGPDLFIWAHDWIGKFAEAGLLEPIDEYVTEDLLNEFAPMAQDAMQYKGHYYALPFAAETVAIIYNKEMVSEPPKTFDEMKAIMEKYYDPANEKYGIAWPINAYFISAIAQAFGGYYFDDKTEQPGLDKPETIEGFKFFFTEIWPYMAPTGDYNTQQSIFLEGRAPMMVNGPWSINDVKKAGINFGVVPLPPIIKDGKEYWPRPYGGVKLIYFAAGIKNKDAAWKFAKWLTTSEESIKTLALELGYIPVLTKVLDDPEIKNDPVIYGFGQAVQHAYLMPKSPKMSAVWGGVDGAINEILQDPQNADIEGILKKYQQEILNNMQG.

The N-terminal stretch at 1 to 20 (MRRATYAFALLAILVLGVVA) is a signal peptide. The interval 28–52 (TTTPTQTSPATQPTTTQTPTQTETQ) is disordered. Over residues 29 to 52 (TTPTQTSPATQPTTTQTPTQTETQ) the composition is skewed to low complexity.

It belongs to the bacterial solute-binding protein 1 family.

Functionally, involved in an abc transport system for maltotriose. Binds maltotriose much more tightly than maltose. In Pyrococcus furiosus (strain ATCC 43587 / DSM 3638 / JCM 8422 / Vc1), this protein is Maltotriose-binding protein (malE).